We begin with the raw amino-acid sequence, 451 residues long: Probable phosphoglucosamine mutase (451 aa).

S96 (phosphoserine intermediate) is an active-site residue. The Mg(2+) site is built by S96, D233, D235, and D237. A Phosphoserine modification is found at S96.

It belongs to the phosphohexose mutase family. It depends on Mg(2+) as a cofactor. Post-translationally, activated by phosphorylation.

The enzyme catalyses alpha-D-glucosamine 1-phosphate = D-glucosamine 6-phosphate. In terms of biological role, catalyzes the conversion of glucosamine-6-phosphate to glucosamine-1-phosphate. The polypeptide is Probable phosphoglucosamine mutase (Pyrococcus abyssi (strain GE5 / Orsay)).